We begin with the raw amino-acid sequence, 614 residues long: Glutamyl-tRNA(Gln) amidotransferase subunit E (614 aa).

This sequence belongs to the GatB/GatE family. GatE subfamily. As to quaternary structure, heterodimer of GatD and GatE.

The enzyme catalyses L-glutamyl-tRNA(Gln) + L-glutamine + ATP + H2O = L-glutaminyl-tRNA(Gln) + L-glutamate + ADP + phosphate + H(+). Functionally, allows the formation of correctly charged Gln-tRNA(Gln) through the transamidation of misacylated Glu-tRNA(Gln) in organisms which lack glutaminyl-tRNA synthetase. The reaction takes place in the presence of glutamine and ATP through an activated gamma-phospho-Glu-tRNA(Gln). The GatDE system is specific for glutamate and does not act on aspartate. The chain is Glutamyl-tRNA(Gln) amidotransferase subunit E from Methanospirillum hungatei JF-1 (strain ATCC 27890 / DSM 864 / NBRC 100397 / JF-1).